Reading from the N-terminus, the 140-residue chain is Ig heavy chain V region 93G7 (140 aa).

A signal peptide spans 1–19 (MGWSFIFLFLLSVTAGVHS). The 120-residue stretch at 20 to 139 (EVQLQQSGAE…WGQGTPLTVS (120 aa)) folds into the Ig-like domain.

This chain is Ig heavy chain V region 93G7, found in Mus musculus (Mouse).